A 924-amino-acid chain; its full sequence is Phosphatidate phosphatase LPIN1 (924 aa).

The interval 1–108 (MNYVGQLAGQ…IPMYLATSPI (108 aa)) is N-LIP. A phosphoserine mark is found at S106 and S150. 2 disordered regions span residues 133 to 248 (PTTA…DCQR) and 269 to 297 (FHAS…ADRL). Basic residues predominate over residues 152-161 (GKKRRKRRRK). Positions 153-158 (KKRRKR) match the Nuclear localization signal motif. Residues 162–172 (AQLDNLKRDDN) are compositionally biased toward basic and acidic residues. Positions 176-193 (SEDEDMFPIEMSSDEDTA) are enriched in acidic residues. Polar residues-rich tracts occupy residues 218–229 (PSISTHPQSASY) and 273–284 (ESPSGSRPSTPK). Phosphoserine is present on residues S285, S287, and S293. Residues 285–297 (SDSELVSKSADRL) show a composition bias toward basic and acidic residues. T298 is subject to Phosphothreonine. 2 disordered regions span residues 314-426 (QAAK…SRHL) and 446-490 (LYFP…STSD). S328 is subject to Phosphoserine. Residues 343–358 (AIHSESSDTFSDQSPT) show a composition bias toward polar residues. Position 392 is a phosphoserine (S392). A compositionally biased stretch (polar residues) spans 404-413 (NTAQSSSKTD). Position 459 is an N6-acetyllysine (K459). The segment covering 461-476 (ASDNGARSANQSPQSV) has biased composition (polar residues). Residues S468, S472, and S483 each carry the phosphoserine modification. Residues K599 and K629 each participate in a glycyl lysine isopeptide (Lys-Gly) (interchain with G-Cter in SUMO) cross-link. The interval 627 to 649 (RIKHESSSSDEEHAAAKPSGSSH) is disordered. The segment covering 628–641 (IKHESSSSDEEHAA) has biased composition (basic and acidic residues). K629 is subject to N6-acetyllysine. S634 and S635 each carry phosphoserine. The C-LIP stretch occupies residues 658–864 (YKKTLRLTSE…VNPKGELVQE (207 aa)). A DXDXT motif motif is present at residues 712-716 (DIDGT). The short motif at 723-727 (LGHIL) is the LXXIL motif element. Residues S921 and S923 each carry the phosphoserine modification.

Belongs to the lipin family. As to quaternary structure, interacts (via LXXIL motif) with PPARA. Interacts with PPARGC1A. Interaction with PPARA and PPARGC1A leads to the formation of a complex that modulates gene transcription. Interacts with MEF2C. Requires Mg(2+) as cofactor. Post-translationally, phosphorylated at multiple sites in response to insulin. Phosphorylation is controlled by the mTOR signaling pathway. Phosphorylation is decreased by epinephrine. Phosphorylation may not directly affect the catalytic activity but may regulate the localization. Dephosphorylated by the CTDNEP1-CNEP1R1 complex. Phosphorylated at multiple sites by mTOR in response to insulin, leading to its inactivation. Phosphorylation does not affect the catalytic activity but regulates the localization. Phosphorylation is decreased by epinephrine. Dephosphorylated by the CTDNEP1-CNEP1R1 complex. Dephosphorylation following mTOR inhibition promotes its activity. In terms of processing, sumoylation is important in brain and is marginal in other tissues. Sumoylation facilitates nuclear localization of isoform 2 in neuronals cells and its transcriptional coactivator activity. Post-translationally, acetylation at Lys-459 and Lys-629 by KAT5 in response to fatty acids promotes translocation to the endoplasmic reticulum and synthesis of diacylglycerol. In terms of tissue distribution, specifically expressed in skeletal muscle. Also expressed prominently in adipose tissue, and testis. Lower expression also detected in kidney, lung, brain and liver. As to expression, predominant isoform in the liver. Predominant isoform in the brain.

The protein localises to the mitochondrion outer membrane. It is found in the cytoplasm. Its subcellular location is the nucleus membrane. The protein resides in the nucleus. It localises to the endoplasmic reticulum membrane. The catalysed reaction is a 1,2-diacyl-sn-glycero-3-phosphate + H2O = a 1,2-diacyl-sn-glycerol + phosphate. It carries out the reaction 1-octadecanoyl-2-(4Z,7Z,10Z,13Z,16Z,19Z-docosahexaenoyl)-sn-glycero-3-phosphate + H2O = 1-octadecanoyl-2-(4Z,7Z,10Z,13Z,16Z,19Z-docosahexaenoyl)-sn-glycerol + phosphate. It catalyses the reaction 1-octadecanoyl-2-(5Z,8Z,11Z,14Z-eicosatetraenoyl)-sn-glycero-3-phosphate + H2O = 1-octadecanoyl-2-(5Z,8Z,11Z,14Z-eicosatetraenoyl)-sn-glycerol + phosphate. The enzyme catalyses 1-octadecanoyl-2-(9Z,12Z-octadecadienoyl)-sn-glycero-3-phosphate + H2O = 1-octadecanoyl-2-(9Z,12Z)-octadecadienoyl-sn-glycerol + phosphate. The catalysed reaction is 1-octadecanoyl-2-(9Z-octadecenoyl)-sn-glycero-3-phosphate + H2O = 1-octadecanoyl-2-(9Z-octadecenoyl)-sn-glycerol + phosphate. It carries out the reaction 1-hexadecanoyl-2-(4Z,7Z,10Z,13Z,16Z,19Z-docosahexaenoyl)-sn-glycero-3-phosphate + H2O = 1-hexadecanoyl-2-(4Z,7Z,10Z,13Z,16Z,19Z-docosahexaenoyl)-sn-glycerol + phosphate. It catalyses the reaction 1,2-dioctadecanoyl-sn-glycero-3-phosphate + H2O = 1,2-dioctadecanoyl-sn-glycerol + phosphate. The enzyme catalyses 1-hexadecanoyl-2-(5Z,8Z,11Z,14Z-eicosatetraenoyl)-sn-glycero-3-phosphate + H2O = 1-hexadecanoyl-2-(5Z,8Z,11Z,14Z-eicosatetraenoyl)-sn-glycerol + phosphate. The catalysed reaction is 1-hexadecanoyl-2-(9Z,12Z-octadecadienoyl)-sn-glycero-3-phosphate + H2O = 1-hexadecanoyl-2-(9Z,12Z-octadecadienoyl)-sn-glycerol + phosphate. It carries out the reaction 1-hexadecanoyl-2-(9Z-octadecenoyl)-sn-glycero-3-phosphate + H2O = 1-hexadecanoyl-2-(9Z-octadecenoyl)-sn-glycerol + phosphate. It catalyses the reaction 1,2-di-(4Z,7Z,10Z,13Z,16Z,19Z-docosahexaenoyl)-sn-glycero-3-phosphate + H2O = 1,2-di-(4Z,7Z,10Z,13Z,16Z,19Z-docosahexaenoyl)-sn-glycerol + phosphate. The enzyme catalyses 1,2-di-(5Z,8Z,11Z,14Z)-eicosatetraenoyl-sn-glycero-3-phosphate + H2O = 1,2-di-(5Z,8Z,11Z,14Z)-eicosatetraenoyl-sn-glycerol + phosphate. The catalysed reaction is 1,2-di-(9Z,12Z-octadecadienoyl)-sn-glycero-3-phosphate + H2O = 1,2-di-(9Z,12Z-octadecadienoyl)-sn-glycerol + phosphate. It carries out the reaction 1,2-di-(9Z-octadecenoyl)-sn-glycero-3-phosphate + H2O = 1,2-di-(9Z-octadecenoyl)-sn-glycerol + phosphate. It catalyses the reaction 1,2-dihexadecanoyl-sn-glycero-3-phosphate + H2O = 1,2-dihexadecanoyl-sn-glycerol + phosphate. Its activity is regulated as follows. Inhibited by N-ethylmaleimide treatment. In terms of biological role, acts as a magnesium-dependent phosphatidate phosphatase enzyme which catalyzes the conversion of phosphatidic acid to diacylglycerol during triglyceride, phosphatidylcholine and phosphatidylethanolamine biosynthesis and therefore controls the metabolism of fatty acids at different levels. Is involved in adipocyte differentiation. Also acts as nuclear transcriptional coactivator for PPARGC1A/PPARA regulatory pathway to modulate lipid metabolism gene expression. Its function is as follows. Recruited at the mitochondrion outer membrane and is involved in mitochondrial fission by converting phosphatidic acid to diacylglycerol. This Mus musculus (Mouse) protein is Phosphatidate phosphatase LPIN1 (Lpin1).